The following is a 71-amino-acid chain: Small ribosomal subunit protein bS21 (71 aa).

The tract at residues 38–71 (YEKPTTVRKRAKAAAQKRHAKKLSRENARRVRLY) is disordered. Residues 43–59 (TVRKRAKAAAQKRHAKK) show a composition bias toward basic residues. Over residues 60–71 (LSRENARRVRLY) the composition is skewed to basic and acidic residues.

The protein belongs to the bacterial ribosomal protein bS21 family.

This chain is Small ribosomal subunit protein bS21, found in Aliivibrio fischeri (strain ATCC 700601 / ES114) (Vibrio fischeri).